The chain runs to 29 residues: U-homostoxin-Hdu1a (29 aa).

The O-linked (GlcNAc...) threonine glycan is linked to Thr-1. Disulfide bonds link Cys-7–Cys-19 and Cys-10–Cys-25.

It belongs to the sea anemone BBH family.

The protein localises to the secreted. It localises to the nematocyst. This Homostichanthus duerdeni (Sea anemone) protein is U-homostoxin-Hdu1a.